The primary structure comprises 39 residues: Glutenin, high molecular weight subunit PC237 (39 aa).

This sequence belongs to the gliadin/glutenin family. As to quaternary structure, disulfide-bridge linked aggregates.

Its function is as follows. Glutenins are high-molecular weight seed storage proteins of wheat endosperm. Thought to be responsible for the visco-elastic property of wheat dough. The polypeptide is Glutenin, high molecular weight subunit PC237 (Triticum aestivum (Wheat)).